We begin with the raw amino-acid sequence, 117 residues long: Ribosome-binding factor A (117 aa).

The protein belongs to the RbfA family. As to quaternary structure, monomer. Binds 30S ribosomal subunits, but not 50S ribosomal subunits or 70S ribosomes.

The protein localises to the cytoplasm. One of several proteins that assist in the late maturation steps of the functional core of the 30S ribosomal subunit. Associates with free 30S ribosomal subunits (but not with 30S subunits that are part of 70S ribosomes or polysomes). Required for efficient processing of 16S rRNA. May interact with the 5'-terminal helix region of 16S rRNA. The protein is Ribosome-binding factor A of Streptococcus thermophilus (strain CNRZ 1066).